Here is a 270-residue protein sequence, read N- to C-terminus: Transcription factor PU.1 (270 aa).

The tract at residues 123 to 164 (SLSPAQPSSDEEEGERQSPPLEVSDGEADGLEPGPGLLPGET) is disordered. Phosphoserine is present on residues Ser-140 and Ser-146. Residues 153-164 (LEPGPGLLPGET) are compositionally biased toward low complexity. Positions 170-253 (IRLYQFLLDL…VKKKLTYQFS (84 aa)) form a DNA-binding region, ETS. DNA contacts are provided by Lys-217, Arg-230, Arg-233, and Lys-243.

Belongs to the ETS family. As to quaternary structure, binds DNA as a monomer. Can form homomers. Directly interacts with CEBPD/NF-IL6-beta; this interaction does not affect DNA-binding properties of each partner. Interacts with NONO/p54(nrb). Interacts with RUNX1/AML1. Interacts with GFI1; the interaction represses SPI1 transcriptional activity, hence blocks SPI1-induced macrophage differentiation of myeloid progenitor cells. Interacts with CEBPE. Interacts with IRF4/Pip and IRF8. Interacts with JUN. Interacts with RB1. Interacts with TBP. In terms of tissue distribution, in the bone marrow, concentrated in hematopoietic stem cell, lymphoid progenitor, myeloid lineage (granulocyte macrophage progenitors, classical dendritic cells, monocytes) and B-cell clusters. Among B-cells, predominantly expressed in pre-B1 cells. Expressed in germinal center B-cells.

It is found in the nucleus. Its activity is regulated as follows. Transcriptional activity at macrophage-specific genes is inhibited by interaction with GFI1, which results in the inhibition of SPI1-induced macrophage differentiation of myeloid progenitor cells, but not that of the granulocyte lineage. In terms of biological role, pioneer transcription factor, which controls hematopoietic cell fate by decompacting stem cell heterochromatin and allowing other transcription factors to enter otherwise inaccessible genomic sites. Once in open chromatin, can directly control gene expression by binding genetic regulatory elements and can also more broadly influence transcription by recruiting transcription factors, such as interferon regulatory factors (IRFs), to otherwise inaccessible genomic regions. Transcriptionally activates genes important for myeloid and lymphoid lineages, such as CSF1R. Transcriptional activation from certain promoters, possibly containing low affinity binding sites, is achieved cooperatively with other transcription factors. FCER1A transactivation is achieved in cooperation with GATA1. May be particularly important for the pro- to pre-B cell transition. Binds (via the ETS domain) onto the purine-rich DNA core sequence 5'-GAGGAA-3', also known as the PU-box. In vitro can bind RNA and interfere with pre-mRNA splicing. This is Transcription factor PU.1 (SPI1) from Homo sapiens (Human).